A 604-amino-acid chain; its full sequence is Microtubule-associated protein 70-4 (604 aa).

Residues 1 to 33 are disordered; sequence MEERGFMSPSLAISASYREGGSKGMSRRRSMRP. Residues 49-351 adopt a coiled-coil conformation; sequence DPVRIELNRL…ADRAAKSEAQ (303 aa). The tract at residues 233–470 is required for targeting to microtubules; the sequence is IIDKMHRQKV…PLNHKSSEGT (238 aa). 2 disordered regions span residues 367-422 and 434-495; these read LKGP…RSLT and GTSR…NDSV. Positions 371-385 are enriched in low complexity; sequence TSSSSRGTSVGRSSS. 2 stretches are compositionally biased toward polar residues: residues 401–422 and 468–478; these read PKIT…RSLT and EGTSRGESPSS. Residues 521-569 adopt a coiled-coil conformation; the sequence is LRDKDEAIEMLAKKVETLTKAMDVEAKKMRREVAVMGKEVAAMRVVDKG.

The protein belongs to the MAP70 family.

The protein localises to the cytoplasm. The protein resides in the cytoskeleton. Its function is as follows. Plant-specific protein that interact with microtubules. This Arabidopsis thaliana (Mouse-ear cress) protein is Microtubule-associated protein 70-4 (MAP70.4).